A 390-amino-acid chain; its full sequence is Probable tRNA pseudouridine synthase D (390 aa).

Asp93 (nucleophile) is an active-site residue. Positions 166–353 (HVLNYFGIQR…YGTRRKLITP (188 aa)) constitute a TRUD domain.

Belongs to the pseudouridine synthase TruD family.

It carries out the reaction uridine(13) in tRNA = pseudouridine(13) in tRNA. Its function is as follows. Could be responsible for synthesis of pseudouridine from uracil-13 in transfer RNAs. This chain is Probable tRNA pseudouridine synthase D, found in Methanococcus vannielii (strain ATCC 35089 / DSM 1224 / JCM 13029 / OCM 148 / SB).